The chain runs to 1317 residues: ABC transporter C family member 14 (1317 aa).

The 286-residue stretch at 119–404 (NKYALISNIF…LPEDIYKAIG (286 aa)) folds into the ABC transmembrane type-1 1 domain. The next 5 membrane-spanning stretches (helical) occupy residues 127–147 (IFIT…INYI), 156–176 (SILK…GQSI), 249–269 (ILIL…VGFG), 341–361 (VLFW…VLVS), and 375–395 (LDVT…LIYL). Residues 426–451 (ENNQNINFNNNNNNNNNNKNNNNNDD) are disordered. Residues 427–449 (NNQNINFNNNNNNNNNNKNNNNN) show a composition bias toward low complexity. The ABC transporter 1 domain occupies 490–710 (ENEENIKINE…ISDKNDPNLI (221 aa)). 522–529 (GVVGSGKT) lines the ATP pocket. Transmembrane regions (helical) follow at residues 734–754 (YFSY…FFIG), 778–798 (DSFY…LLMI), 871–891 (LISI…LFII), 969–989 (LEVM…LFTS), and 992–1012 (GLAA…SWGV). Residues 744–1027 (LFITISLFFI…LEVKMNSFQR (284 aa)) form the ABC transmembrane type-1 2 domain. An ABC transporter 2 domain is found at 1071 to 1306 (IEFKNVEIKY…PNSKFNKLIK (236 aa)). ATP is bound at residue 1105-1112 (GRTGAGKT).

This sequence belongs to the ABC transporter superfamily. ABCC family. Conjugate transporter (TC 3.A.1.208) subfamily.

The protein localises to the membrane. The sequence is that of ABC transporter C family member 14 (abcC14) from Dictyostelium discoideum (Social amoeba).